An 81-amino-acid chain; its full sequence is Sulfur carrier protein TusA (81 aa).

The active-site Cysteine persulfide intermediate is cysteine 19.

The protein belongs to the sulfur carrier protein TusA family. In terms of assembly, interacts with IscS.

It localises to the cytoplasm. It participates in tRNA modification. Functionally, sulfur carrier protein involved in sulfur trafficking in the cell. Part of a sulfur-relay system required for 2-thiolation during synthesis of 2-thiouridine of the modified wobble base 5-methylaminomethyl-2-thiouridine (mnm(5)s(2)U) in tRNA. Interacts with IscS and stimulates its cysteine desulfurase activity. Accepts an activated sulfur from IscS, which is then transferred to TusD, and thus determines the direction of sulfur flow from IscS to 2-thiouridine formation. Also appears to be involved in sulfur transfer for the biosynthesis of molybdopterin. In Escherichia coli O17:K52:H18 (strain UMN026 / ExPEC), this protein is Sulfur carrier protein TusA.